The sequence spans 130 residues: Small ribosomal subunit protein uS11 (130 aa).

Belongs to the universal ribosomal protein uS11 family. In terms of assembly, part of the 30S ribosomal subunit. Interacts with proteins S7 and S18. Binds to IF-3.

In terms of biological role, located on the platform of the 30S subunit, it bridges several disparate RNA helices of the 16S rRNA. Forms part of the Shine-Dalgarno cleft in the 70S ribosome. This chain is Small ribosomal subunit protein uS11, found in Campylobacter jejuni subsp. jejuni serotype O:6 (strain 81116 / NCTC 11828).